The chain runs to 366 residues: Homoserine O-acetyltransferase (366 aa).

One can recognise an AB hydrolase-1 domain in the interval 47-349; it reads NAILICHALS…SGEGHDSFLL (303 aa). Ser-153 functions as the Nucleophile in the catalytic mechanism. Residue Arg-221 participates in substrate binding. Catalysis depends on residues Asp-311 and His-344. Residue Asp-345 participates in substrate binding.

Belongs to the AB hydrolase superfamily. MetX family. As to quaternary structure, homodimer.

The protein localises to the cytoplasm. It carries out the reaction L-homoserine + acetyl-CoA = O-acetyl-L-homoserine + CoA. Its pathway is amino-acid biosynthesis; L-methionine biosynthesis via de novo pathway; O-acetyl-L-homoserine from L-homoserine: step 1/1. Transfers an acetyl group from acetyl-CoA to L-homoserine, forming acetyl-L-homoserine. The polypeptide is Homoserine O-acetyltransferase (Leptospira interrogans serogroup Icterohaemorrhagiae serovar copenhageni (strain Fiocruz L1-130)).